The sequence spans 925 residues: MLEDEYQLDFFKNNGFVRKQCQKCGKFFWTRDPERNTCGDAPCDPYSFIGSPVFSREFNISEMREYYLSFFEARGHTRLDRYPVVARWRDDIYLTIASIADFQPFVTSGQVPPPANPLTISQPCIRLNDLDSVGRSGRHLTNFEMMAHHAFNKRGNEIYWKEHTLELCDELLTSLKVDPFAVTYKEEPWAGGGNAGPCVEVIVHGLELATLVFMDLKTDKKGDILIKGETYSKMDNYIVDTGYGLERFVWASKGSPTIYDALFPGIVNELMGLAGLEHELNNTEYSNILAQNARLAGFMDVSEKANLLELRKKVASSIGMTVDKLSVIMEPVEKVYAITDHTRCLTFMLGDGIIPSNVKAGYLARLVLRRTLRMMKDLDIRTPLSEIVDMHIRNMPEYPEFRANFPVIQDILESEEEKFNITMERGRRIIQKSASHFKKTGEKIPLSQLTELYDSHGIPPEMAKEVAADIGVGVEFPDNFYSIIGELHNKAEEKEEEVIPFAERLKHLPKTKRRFYDEPTRLEFEAVVLDVFDNHIVLDNTFFYAEGGGQPADIGTISVGDIVYKVVDVQVYEGVIVHTVDIPDGELEITKGDIITGKVDERRRMTLARHHTATHIVNDAARKVLGKHIWQAGAQKFEDHSRLDLSHYKHISPEELKQIELLANRTVMENKRVITEWMPRIEAEQVYGFGLYQGGVPPGEKIRIVKVGDDVEACGGTHCLSTGVIGPIKILKTERIQDGVERVEFAAGIAAVRAMQKMESLLVDSAKTLSVPPEHLPVSVERFFGEWKDLKKENERLKEDLARSRVYRMLGDASELAGLRVVSEQVPGADSLELQKIATELLKQENVVTLLASDLEGVKLVASVGEKAIECGINAGNLVREMSKIVGGGGGGKPALAMGGGTDPTRIQDALSRGLELVKEACKEA.

Residues H611, H615, C714, and H718 each coordinate Zn(2+).

The protein belongs to the class-II aminoacyl-tRNA synthetase family. Zn(2+) serves as cofactor.

Its subcellular location is the cytoplasm. It carries out the reaction tRNA(Ala) + L-alanine + ATP = L-alanyl-tRNA(Ala) + AMP + diphosphate. In terms of biological role, catalyzes the attachment of alanine to tRNA(Ala) in a two-step reaction: alanine is first activated by ATP to form Ala-AMP and then transferred to the acceptor end of tRNA(Ala). Also edits incorrectly charged Ser-tRNA(Ala) and Gly-tRNA(Ala) via its editing domain. In Methanosarcina acetivorans (strain ATCC 35395 / DSM 2834 / JCM 12185 / C2A), this protein is Alanine--tRNA ligase.